A 79-amino-acid polypeptide reads, in one-letter code: MDNIEQRVKKIVAEQLGVAEADIKNESSFVNDLGADSLDTVELVMALEDEFGMEIPDEEAEKITTVQQAIDYATAHVKA.

Residues 2 to 77 enclose the Carrier domain; the sequence is DNIEQRVKKI…QAIDYATAHV (76 aa). Position 37 is an O-(pantetheine 4'-phosphoryl)serine (S37).

This sequence belongs to the acyl carrier protein (ACP) family. Post-translationally, 4'-phosphopantetheine is transferred from CoA to a specific serine of apo-ACP by AcpS. This modification is essential for activity because fatty acids are bound in thioester linkage to the sulfhydryl of the prosthetic group.

It localises to the cytoplasm. It functions in the pathway lipid metabolism; fatty acid biosynthesis. Carrier of the growing fatty acid chain in fatty acid biosynthesis. This Cupriavidus pinatubonensis (strain JMP 134 / LMG 1197) (Cupriavidus necator (strain JMP 134)) protein is Acyl carrier protein.